A 315-amino-acid chain; its full sequence is Porphobilinogen deaminase (315 aa).

Position 234 is an S-(dipyrrolylmethanemethyl)cysteine (Cys-234).

This sequence belongs to the HMBS family. In terms of assembly, monomer. It depends on dipyrromethane as a cofactor.

It catalyses the reaction 4 porphobilinogen + H2O = hydroxymethylbilane + 4 NH4(+). Its pathway is porphyrin-containing compound metabolism; protoporphyrin-IX biosynthesis; coproporphyrinogen-III from 5-aminolevulinate: step 2/4. Tetrapolymerization of the monopyrrole PBG into the hydroxymethylbilane pre-uroporphyrinogen in several discrete steps. This is Porphobilinogen deaminase from Mycobacterium avium (strain 104).